The following is a 984-amino-acid chain: Serine/threonine-protein kinase N2 (984 aa).

Serine 21 is subject to Phosphoserine. Residues 33 to 109 form the REM-1 1 domain; sequence KLDFSDTMVQ…LQELNAHIVV (77 aa). Lysine 77 is modified (N6-acetyllysine). Position 110 is a phosphoserine (serine 110). The disordered stretch occupies residues 114 to 133; sequence DITDCPRTPDTPNNDPRCST. A phosphothreonine mark is found at threonine 121 and threonine 124. REM-1 domains lie at 121–203 and 204–284; these read TPDT…TNEL and AFDN…EVPK. Over residues 123–133 the composition is skewed to polar residues; it reads DTPNNDPRCST. Phosphoserine occurs at positions 302, 306, 360, and 362. The tract at residues 351 to 383 is disordered; the sequence is ATSVALPGWSPSETRSSFMSRTSKSKSGSSRNL. The 121-residue stretch at 353 to 473 folds into the C2 domain; that stretch reads SVALPGWSPS…LYLEPQGTLF (121 aa). Positions 364 to 381 are enriched in low complexity; it reads TRSSFMSRTSKSKSGSSR. A necessary to rescue apical junction formation region spans residues 382–463; that stretch reads NLLKTDDLSN…FLDNQRHGMC (82 aa). Residues serine 535, serine 583, and serine 620 each carry the phosphoserine modification. Residues 558–584 form a disordered region; the sequence is ASDSTVTKLDFDLEPEPPPAPPRASSL. Threonine 628 carries the post-translational modification Phosphothreonine. At serine 631 the chain carries Phosphoserine. The region spanning 657-916 is the Protein kinase domain; it reads FRCCAVLGRG…AEDVKKHPFF (260 aa). Residues 663-671 and lysine 686 contribute to the ATP site; that span reads LGRGHFGKV. Catalysis depends on aspartate 782, which acts as the Proton acceptor. Threonine 816 is subject to Phosphothreonine; by PDPK1. The segment at 917–977 is necessary for the catalytic activity; that stretch reads RLIDWSALMD…EEEQEMFRDF (61 aa). The AGC-kinase C-terminal domain maps to 917 to 984; it reads RLIDWSALMD…RDFDYIADWC (68 aa). Serine 952 bears the Phosphoserine mark. Residue threonine 958 is modified to Phosphothreonine. The segment at 978 to 984 is negatively regulates the responsiveness of the catalytic activity by cardiolipin and is required for optimal activation by the GTP-bound RhoA; that stretch reads DYIADWC.

It belongs to the protein kinase superfamily. AGC Ser/Thr protein kinase family. PKC subfamily. In terms of assembly, interacts (via the REM repeats) with RHOA (GTP-bound form preferentially) and interacts (via the REM repeats) with RAC1 (GTP-bound form preferentially); the interactions induce its autophosphorylation. Interacts with RHOC. Interacts with NCK1 and NCK2. Interacts with NCK1 (via SH3 domains). Interacts with CD44. Interacts (via C-terminal kinase domain) with PDPK1; the interaction stimulates PDPK1 kinase activity. Interacts with MAP3K2; the interaction activates PRK2 kinase activity in a MAP3K2-independent kinase activity. Interacts (via C-terminal domain) with AKT1; the interaction occurs with the C-terminal cleavage product of PRK2 in apoptotic cells. Interacts (via C-terminus) with PTPN13 (via PDZ 3 domain). Interacts with CDK10. (Microbial infection) Interacts with HCV NS5B (via N-terminal finger domain). Autophosphorylated. Phosphorylated during mitosis. Phosphorylated by CDK10. Post-translationally, activated by limited proteolysis with trypsin. Proteolytically cleaved by caspase-3 during the induction of apoptotic cell death. In terms of tissue distribution, ubiquitous. Expressed in numerous tumor cell lines, especially in bladder tumor cells.

It is found in the cytoplasm. The protein localises to the nucleus. The protein resides in the membrane. It localises to the cell projection. Its subcellular location is the lamellipodium. It is found in the cytoskeleton. The protein localises to the cleavage furrow. The protein resides in the midbody. It localises to the cell junction. The catalysed reaction is L-seryl-[protein] + ATP = O-phospho-L-seryl-[protein] + ADP + H(+). It catalyses the reaction L-threonyl-[protein] + ATP = O-phospho-L-threonyl-[protein] + ADP + H(+). With respect to regulation, kinase activity is activated upon binding to GTP-bound Rhoa/Rac1 GTPases. Activated by caspase-3 (CASP3) cleavage during apoptosis. Activated by lipids, particularly cardiolipin and to a lesser extent by other acidic phospholipids and unsaturated fatty acids. Two specific sites, Thr-816 (activation loop of the kinase domain) and Thr-958 (turn motif), need to be phosphorylated for its full activation. In terms of biological role, PKC-related serine/threonine-protein kinase and Rho/Rac effector protein that participates in specific signal transduction responses in the cell. Plays a role in the regulation of cell cycle progression, actin cytoskeleton assembly, cell migration, cell adhesion, tumor cell invasion and transcription activation signaling processes. Phosphorylates CTTN in hyaluronan-induced astrocytes and hence decreases CTTN ability to associate with filamentous actin. Phosphorylates HDAC5, therefore lead to impair HDAC5 import. Direct RhoA target required for the regulation of the maturation of primordial junctions into apical junction formation in bronchial epithelial cells. Required for G2/M phases of the cell cycle progression and abscission during cytokinesis in a ECT2-dependent manner. Stimulates FYN kinase activity that is required for establishment of skin cell-cell adhesion during keratinocytes differentiation. Regulates epithelial bladder cells speed and direction of movement during cell migration and tumor cell invasion. Inhibits Akt pro-survival-induced kinase activity. Mediates Rho protein-induced transcriptional activation via the c-fos serum response factor (SRF). Involved in the negative regulation of ciliogenesis. Functionally, (Microbial infection) Phosphorylates HCV NS5B leading to stimulation of HCV RNA replication. This Homo sapiens (Human) protein is Serine/threonine-protein kinase N2 (PKN2).